Consider the following 211-residue polypeptide: ATP phosphoribosyltransferase (211 aa).

The protein belongs to the ATP phosphoribosyltransferase family. Short subfamily. Heteromultimer composed of HisG and HisZ subunits.

It is found in the cytoplasm. It carries out the reaction 1-(5-phospho-beta-D-ribosyl)-ATP + diphosphate = 5-phospho-alpha-D-ribose 1-diphosphate + ATP. It functions in the pathway amino-acid biosynthesis; L-histidine biosynthesis; L-histidine from 5-phospho-alpha-D-ribose 1-diphosphate: step 1/9. Its function is as follows. Catalyzes the condensation of ATP and 5-phosphoribose 1-diphosphate to form N'-(5'-phosphoribosyl)-ATP (PR-ATP). Has a crucial role in the pathway because the rate of histidine biosynthesis seems to be controlled primarily by regulation of HisG enzymatic activity. The sequence is that of ATP phosphoribosyltransferase (hisG) from Pseudomonas aeruginosa (strain ATCC 15692 / DSM 22644 / CIP 104116 / JCM 14847 / LMG 12228 / 1C / PRS 101 / PAO1).